The sequence spans 153 residues: Small ribosomal subunit protein uS5c (153 aa).

The region spanning 11–74 is the S5 DRBM domain; sequence WQERVIQIRR…VDAKKQLINI (64 aa).

This sequence belongs to the universal ribosomal protein uS5 family. Part of the 30S ribosomal subunit. Contacts protein S4.

It is found in the plastid. The protein resides in the chloroplast. With S4 and S12 plays an important role in translational accuracy. The polypeptide is Small ribosomal subunit protein uS5c (rps5) (Cyanidioschyzon merolae (strain NIES-3377 / 10D) (Unicellular red alga)).